A 193-amino-acid polypeptide reads, in one-letter code: MKSLIRPLVVLFVILTAVTGLAYPAVMTVFGQAVFPSQANGSLIEQDGKVVGSALIGQPFDAPKYFWGRLSATAPMPYNAAGSGGSNFGPLNPSLPDQVKARIAALRDAGTDLSKPVPVDLVTASASGLDPEITPAAAAYQVERVAKARHLAPDAVAQLVAANTTGRQFGVLGEPRVNVLKLNLALDAAQAAH.

The helical transmembrane segment at 7–27 (PLVVLFVILTAVTGLAYPAVM) threads the bilayer.

This sequence belongs to the KdpC family. As to quaternary structure, the system is composed of three essential subunits: KdpA, KdpB and KdpC.

The protein resides in the cell inner membrane. In terms of biological role, part of the high-affinity ATP-driven potassium transport (or Kdp) system, which catalyzes the hydrolysis of ATP coupled with the electrogenic transport of potassium into the cytoplasm. This subunit acts as a catalytic chaperone that increases the ATP-binding affinity of the ATP-hydrolyzing subunit KdpB by the formation of a transient KdpB/KdpC/ATP ternary complex. The chain is Potassium-transporting ATPase KdpC subunit from Burkholderia cenocepacia (strain ATCC BAA-245 / DSM 16553 / LMG 16656 / NCTC 13227 / J2315 / CF5610) (Burkholderia cepacia (strain J2315)).